Reading from the N-terminus, the 577-residue chain is Arginine--tRNA ligase (577 aa).

A 'HIGH' region motif is present at residues 122–132; it reads PNVAKEMHVGH.

Belongs to the class-I aminoacyl-tRNA synthetase family. Monomer.

The protein resides in the cytoplasm. It catalyses the reaction tRNA(Arg) + L-arginine + ATP = L-arginyl-tRNA(Arg) + AMP + diphosphate. This chain is Arginine--tRNA ligase, found in Escherichia coli O81 (strain ED1a).